The chain runs to 424 residues: Phosphoprotein associated with glycosphingolipid-enriched microdomains 1 (424 aa).

Residues Met-1–Met-17 lie on the Extracellular side of the membrane. The chain crosses the membrane as a helical; Signal-anchor for type III membrane protein span at residues Val-18–Leu-38. 2 S-palmitoyl cysteine lipidation sites follow: Cys-39 and Cys-42. Residues Cys-39–Leu-424 are Cytoplasmic-facing. Phosphoserine occurs at positions 52 and 63. Tyr-107 carries the phosphotyrosine; by LYN modification. Ser-157 is subject to Phosphoserine. Phosphotyrosine is present on residues Tyr-165, Tyr-183, and Tyr-224. The interval Asp-194–Cys-347 is disordered. Basic and acidic residues predominate over residues Ala-215–Asn-230. Phosphoserine is present on Ser-226. Over residues Ser-236–Ser-247 the composition is skewed to polar residues. Tyr-314 is modified (phosphotyrosine; by FYN and LYN). Positions Tyr-314–Val-317 are interaction with CSK. The segment covering Ser-331 to Cys-347 has biased composition (polar residues). Ser-346 bears the Phosphoserine mark. 3 positions are modified to phosphotyrosine: Tyr-351, Tyr-381, and Tyr-409. Residues Pro-361–Leu-424 are disordered. An interaction with NHERF1 region spans residues Thr-422 to Leu-424.

In terms of assembly, interacts with NHERF1/EBP50. In resting T-cells, part of a PAG1-NHERF1-MSN complex which is disrupted upon TCR activation. When phosphorylated, interacts with CSK. Identified in a complex with LYN and STAT3. Interacts with LYN. In terms of processing, palmitoylated. Phosphorylated by FYN on Tyr-314 in resting T-cells; which promotes interaction with CSK. Dephosphorylated by PTPRC/CD45 upon TCR activation; which leads to CSK dissociation. May also be dephosphorylated by PTPN11. Hyperphosphorylated in mast cells upon FCER1 activation. Phosphorylated by LYN in response to EPO. As to expression, ubiquitously expressed, with highest levels in developing brain, lung, thymus, spleen and testis. Present in mast cells.

It is found in the cell membrane. Its function is as follows. Negatively regulates TCR (T-cell antigen receptor)-mediated signaling in T-cells and FCER1 (high affinity immunoglobulin epsilon receptor)-mediated signaling in mast cells. Promotes CSK activation and recruitment to lipid rafts, which results in LCK inhibition. Inhibits immunological synapse formation by preventing dynamic arrangement of lipid raft proteins. May be involved in cell adhesion signaling. This chain is Phosphoprotein associated with glycosphingolipid-enriched microdomains 1 (Pag1), found in Rattus norvegicus (Rat).